The following is a 433-amino-acid chain: Ribosomal protein uS12 methylthiotransferase RimO (433 aa).

Residues 9–124 (NKINVITLGC…LLKALGADYR (116 aa)) form the MTTase N-terminal domain. 6 residues coordinate [4Fe-4S] cluster: Cys-18, Cys-53, Cys-87, Cys-148, Cys-152, and Cys-155. The 231-residue stretch at 134 to 364 (TTPKNYAYLK…MDLQSQISWD (231 aa)) folds into the Radical SAM core domain. The TRAM domain occupies 367-433 (QEKLGQTFRC…TEFDLYGEPA (67 aa)).

The protein belongs to the methylthiotransferase family. RimO subfamily. It depends on [4Fe-4S] cluster as a cofactor.

It is found in the cytoplasm. It catalyses the reaction L-aspartate(89)-[ribosomal protein uS12]-hydrogen + (sulfur carrier)-SH + AH2 + 2 S-adenosyl-L-methionine = 3-methylsulfanyl-L-aspartate(89)-[ribosomal protein uS12]-hydrogen + (sulfur carrier)-H + 5'-deoxyadenosine + L-methionine + A + S-adenosyl-L-homocysteine + 2 H(+). Functionally, catalyzes the methylthiolation of an aspartic acid residue of ribosomal protein uS12. This is Ribosomal protein uS12 methylthiotransferase RimO from Flavobacterium psychrophilum (strain ATCC 49511 / DSM 21280 / CIP 103535 / JIP02/86).